The following is a 213-amino-acid chain: CDP-diacylglycerol--inositol 3-phosphatidyltransferase (213 aa).

Residues 1-5 (MPEEN) lie on the Cytoplasmic side of the membrane. The helical transmembrane segment at 6–26 (IFLFVPNLIGYARIVFAIISF) threads the bilayer. Position 27 (Y27) is a topological domain, lumenal. A helical transmembrane segment spans residues 28–48 (FMPCCPFTASSFYLLSGLLDA). Positions 47 and 50 each coordinate Mg(2+). Residues 49–73 (FDGHAARALNQGTRFGAMLDMLTDR) lie on the Cytoplasmic side of the membrane. A CDP-1,2-diacyl-sn-glycerol-binding residues include G51, R55, and T61. Mg(2+) contacts are provided by D68 and D72. The active-site Proton acceptor is D72. A helical membrane pass occupies residues 74–94 (CATMCLLVNLALLYPRATLLF). Q95 is a topological domain (lumenal). A helical transmembrane segment spans residues 96-116 (LSMSLDVASHWLHLHSSVVRG). At 117–139 (SESHKMIDLSGNPVLRIYYTSRP) the chain is on the cytoplasmic side. The chain crosses the membrane as a helical span at residues 140–160 (ALFTLCAGNELFYCLLYLFNF). Topologically, residues 161–174 (SEGPLVGSVGLFRM) are lumenal. A helical membrane pass occupies residues 175 to 195 (GLWITAPIALLKSIISVIHLV). At 196 to 213 (TAARNMAALDAADRAKKK) the chain is on the cytoplasmic side.

Belongs to the CDP-alcohol phosphatidyltransferase class-I family. Mn(2+) is required as a cofactor. Requires Mg(2+) as cofactor. As to expression, detected in liver (at protein level). Widely expressed. Highly expressed in the brain and kidney; lower levels in heart, spleen, lung, liver, skeletal muscle and testis.

The protein resides in the endoplasmic reticulum membrane. It localises to the cell membrane. The enzyme catalyses a CDP-1,2-diacyl-sn-glycerol + myo-inositol = a 1,2-diacyl-sn-glycero-3-phospho-(1D-myo-inositol) + CMP + H(+). Its function is as follows. Catalyzes the biosynthesis of phosphatidylinositol (PtdIns) as well as PtdIns:inositol exchange reaction. May thus act to reduce an excessive cellular PtdIns content. The exchange activity is due to the reverse reaction of PtdIns synthase and is dependent on CMP, which is tightly bound to the enzyme. This chain is CDP-diacylglycerol--inositol 3-phosphatidyltransferase, found in Rattus norvegicus (Rat).